Consider the following 583-residue polypeptide: uncharacterized protein (583 aa).

This is an uncharacterized protein from Schizosaccharomyces pombe (strain 972 / ATCC 24843) (Fission yeast).